The sequence spans 207 residues: Large ribosomal subunit protein bL25 (207 aa).

Belongs to the bacterial ribosomal protein bL25 family. CTC subfamily. As to quaternary structure, part of the 50S ribosomal subunit; part of the 5S rRNA/L5/L18/L25 subcomplex. Contacts the 5S rRNA. Binds to the 5S rRNA independently of L5 and L18.

This is one of the proteins that binds to the 5S RNA in the ribosome where it forms part of the central protuberance. In Orientia tsutsugamushi (strain Ikeda) (Rickettsia tsutsugamushi), this protein is Large ribosomal subunit protein bL25.